We begin with the raw amino-acid sequence, 273 residues long: Oligodendrocyte transcription factor 3 (273 aa).

The span at 1-14 (MNSDSSSVSSRASS) shows a compositional bias: low complexity. The tract at residues 1–72 (MNSDSSSVSS…KAAGESSKYK (72 aa)) is disordered. Residues 24-34 (DHHHRHHHHHQ) show a composition bias toward basic residues. A compositionally biased stretch (polar residues) spans 37 to 47 (RLNSVSSTQGD). Residues 69-90 (SKYKIKKQLSEQDLQQLRLKIN) are a coiled coil. Residues 84–138 (QLRLKINGRERKRMHDLNLAMDGLREVMPYAHGPSVRKLSKIATLLLARNYILML) form the bHLH domain.

Weakly expressed, mainly in non-neural tissues.

It localises to the nucleus. Its function is as follows. May determine the distinct specification program of class A neurons in the dorsal part of the spinal cord and suppress specification of class B neurons. This is Oligodendrocyte transcription factor 3 (Olig3) from Mus musculus (Mouse).